Here is a 759-residue protein sequence, read N- to C-terminus: Cullin-4A (759 aa).

Residues 1–40 (MADEGPRKGSVSALMGRTNGLTKPAALAGGPAKPGGTGGS) form a disordered region. Residue lysine 8 forms a Glycyl lysine isopeptide (Lys-Gly) (interchain with G-Cter in SUMO2) linkage. Serine 10 is modified (phosphoserine). Over residues 20 to 31 (GLTKPAALAGGP) the composition is skewed to low complexity. Residue lysine 33 forms a Glycyl lysine isopeptide (Lys-Gly) (interchain with G-Cter in ubiquitin) linkage. Residues 691–750 (DRQYQIDAAIVRIMKMRKTLGHNLLVSELYNQLKFPVKPGDLKKRIESLIDRDYMERDKD) form the Cullin neddylation domain. A Glycyl lysine isopeptide (Lys-Gly) (interchain with G-Cter in NEDD8) cross-link involves residue lysine 705.

This sequence belongs to the cullin family. In terms of assembly, can self-associate. Component of multiple DCX (DDB1-CUL4-X-box) E3 ubiquitin-protein ligase complexes that seem to consist of DDB1, CUL4A or CUL4B, RBX1 and a variable substrate recognition component which seems to belong to a protein family described as DCAF (Ddb1- and Cul4-associated factor) or CDW (CUL4-DDB1-associated WD40-repeat) proteins. Component of the CSA complex (DCX(ERCC8) complex) containing ERCC8, RBX1, DDB1 and CUL4A; the CSA complex interacts with RNA polymerase II; upon UV irradiation it interacts with the COP9 signalosome and preferentially with the hyperphosphorylated form of RNA polymerase II. Component of the DCX(DET1-COP1) complex with the substrate recognition component DET1 and COP1. Component of the DCX(DDB2) complex with the substrate recognition component DDB2. Component of the DCX(DTL) complex with the putative substrate recognition component DTL. Component of DCX complexes part of the DesCEND (destruction via C-end degrons) pathway, which contain either TRPC4AP or DCAF12 as substrate-recognition component. Component of the DCX(AMBRA1) complex with the substrate recognition component AMBRA1. Interacts with DDB1, RBX1, RNF7, CDT1, TIP120A/CAND1, SKP2, CDKN1B, MDM2, TP53 and HOXA9. Interacts with DDB2; the interactions with DDB2 and CAND1 are mutually exclusive. Interacts with DCAF1, DTL, DDA1, DCAF6, DCAF4, DCAF16, DCAF17, DET1, WDTC1, DCAF5, DCAF11, WDR24A, COP1, PAFAH1B1, ERCC8, GRWD1, FBXW5, RBBP7, GNB2, WSB1, WSB2, NUP43, PWP1, FBXW8, ATG16L1, KATNB1, RBBP4, RBBP5, LRWD1 and DCAF8. May interact with WDR26, WDR51B, SNRNP40, WDR61, WDR76, WDR5. Interacts (when neddylated) with ARIH1; leading to activate the E3 ligase activity of ARIH1. The DDB1-CUL4A complex interacts with CRY1. Interacts (unneddylated form) with DCUN1D1, DCUN1D2, DCUN1D3, DCUN1D4 and DCUN1D5; these interactions promote the cullin neddylation. (Microbial infection) Interacts with murine cytomegalovirus M48. In terms of processing, neddylated; required for activity of cullin-RING-based E3 ubiquitin-protein ligase complexes. Deneddylated via its interaction with the COP9 signalosome (CSN) complex. (Microbial infection) Deneddylated by murine cytomegalovirus M48 leading to a S-phase-like environment that is required for efficient replication of the viral genome. As to expression, expressed in oocytes (at protein level). In the ovary, also expressed in cumulus cells. Expressed in testis, spleen and kidney.

Its pathway is protein modification; protein ubiquitination. Its function is as follows. Core component of multiple cullin-RING-based E3 ubiquitin-protein ligase complexes which mediate the ubiquitination of target proteins. As a scaffold protein may contribute to catalysis through positioning of the substrate and the ubiquitin-conjugating enzyme. The E3 ubiquitin-protein ligase activity of the complex is dependent on the neddylation of the cullin subunit and is inhibited by the association of the deneddylated cullin subunit with TIP120A/CAND1. The functional specificity of the E3 ubiquitin-protein ligase complex depends on the variable substrate recognition component. DCX(DET1-COP1) directs ubiquitination of JUN. DCX(DDB2) directs ubiquitination of XPC. DCX(DDB2) ubiquitinates histones H3-H4 and is required for efficient histone deposition during replication-coupled (H3.1) and replication-independent (H3.3) nucleosome assembly, probably by facilitating the transfer of H3 from ASF1A/ASF1B to other chaperones involved in histone deposition. DCX(DTL) plays a role in PCNA-dependent polyubiquitination of CDT1 and MDM2-dependent ubiquitination of p53/TP53 in response to radiation-induced DNA damage and during DNA replication. DCX(DTL) directs autoubiquitination of DTL. In association with DDB1 and SKP2 probably is involved in ubiquitination of CDKN1B/p27kip. Is involved in ubiquitination of HOXA9. The DDB1-CUL4A-DTL E3 ligase complex regulates the circadian clock function by mediating the ubiquitination and degradation of CRY1. The DCX(ERCC8) complex (also named CSA complex) plays a role in transcription-coupled repair (TCR). A number of DCX complexes (containing either TRPC4AP or DCAF12 as substrate-recognition component) are part of the DesCEND (destruction via C-end degrons) pathway, which recognizes a C-degron located at the extreme C terminus of target proteins, leading to their ubiquitination and degradation. With CUL4B, contributes to ribosome biogenesis. The DCX(AMBRA1) complex is a master regulator of the transition from G1 to S cell phase by mediating ubiquitination of phosphorylated cyclin-D (CCND1, CCND2 and CCND3). The DCX(AMBRA1) complex also acts as a regulator of Cul5-RING (CRL5) E3 ubiquitin-protein ligase complexes by mediating ubiquitination and degradation of Elongin-C (ELOC) component of CRL5 complexes. The polypeptide is Cullin-4A (Mus musculus (Mouse)).